Here is a 349-residue protein sequence, read N- to C-terminus: Cbb3-type cytochrome c oxidase subunit CcoP (349 aa).

Residues Met-1–Arg-67 form a disordered region. Topologically, residues Met-1–Thr-96 are cytoplasmic. Residues Asn-16–Lys-30 are compositionally biased toward basic and acidic residues. The chain crosses the membrane as a helical span at residues Phe-97 to Val-117. The Periplasmic portion of the chain corresponds to Asn-118–Glu-349. Cytochrome c domains follow at residues Tyr-168 to Gly-258 and Ala-265 to Gly-346. Residues Cys-181, Cys-184, His-185, Met-233, Cys-278, Cys-281, His-282, and Met-323 each coordinate heme c.

The protein belongs to the CcoP / FixP family. In terms of assembly, component of the cbb3-type cytochrome c oxidase at least composed of CcoN, CcoO, CcoQ and CcoP. Heme c serves as cofactor.

The protein resides in the cell inner membrane. It functions in the pathway energy metabolism; oxidative phosphorylation. In terms of biological role, C-type cytochrome. Part of the cbb3-type cytochrome c oxidase complex. CcoP subunit is required for transferring electrons from donor cytochrome c via its heme groups to CcoO subunit. From there, electrons are shuttled to the catalytic binuclear center of CcoN subunit where oxygen reduction takes place. The complex also functions as a proton pump. In Paracoccus denitrificans (strain Pd 1222), this protein is Cbb3-type cytochrome c oxidase subunit CcoP.